A 154-amino-acid polypeptide reads, in one-letter code: Myoglobin (154 aa).

The region spanning 2–148 (GLSDQEWQQV…FRNDMASKYK (147 aa)) is the Globin domain. His65 is a nitrite binding site. His65 provides a ligand contact to O2. Position 94 (His94) interacts with heme b.

This sequence belongs to the globin family. As to quaternary structure, monomeric.

The protein localises to the cytoplasm. It is found in the sarcoplasm. It carries out the reaction Fe(III)-heme b-[protein] + nitric oxide + H2O = Fe(II)-heme b-[protein] + nitrite + 2 H(+). The catalysed reaction is H2O2 + AH2 = A + 2 H2O. In terms of biological role, monomeric heme protein which primary function is to store oxygen and facilitate its diffusion within muscle tissues. Reversibly binds oxygen through a pentacoordinated heme iron and enables its timely and efficient release as needed during periods of heightened demand. Depending on the oxidative conditions of tissues and cells, and in addition to its ability to bind oxygen, it also has a nitrite reductase activity whereby it regulates the production of bioactive nitric oxide. Under stress conditions, like hypoxia and anoxia, it also protects cells against reactive oxygen species thanks to its pseudoperoxidase activity. The chain is Myoglobin (MB) from Cerorhinca monocerata (Rhinoceros auklet).